Reading from the N-terminus, the 274-residue chain is Large ribosomal subunit protein uL2cz/uL2cy (274 aa).

2 disordered regions span residues 1–21 (MAIHLYKTSTPGTRNGAVDSQ) and 224–274 (NPVD…RRSK).

Belongs to the universal ribosomal protein uL2 family. As to quaternary structure, part of the 50S ribosomal subunit.

The protein localises to the plastid. Its subcellular location is the chloroplast. In Gossypium hirsutum (Upland cotton), this protein is Large ribosomal subunit protein uL2cz/uL2cy (rpl2-A).